The primary structure comprises 380 residues: Putative RNA ligase (380 aa).

Functionally, putative RNA ligase. Is able to catalyze the adenylation reaction of ssDNA 3'-terminal phosphate (ssDNA 3'p) to 3'-adenylated DNA (ssDNA 3'pp5'A). This Thermovibrio ammonificans (strain DSM 15698 / JCM 12110 / HB-1) protein is Putative RNA ligase.